A 208-amino-acid polypeptide reads, in one-letter code: Putative 3-methyladenine DNA glycosylase (208 aa).

Residues 1 to 20 (MGRAHTVSRGEDHPPIARSE) are disordered.

Belongs to the DNA glycosylase MPG family.

This is Putative 3-methyladenine DNA glycosylase from Mesorhizobium japonicum (strain LMG 29417 / CECT 9101 / MAFF 303099) (Mesorhizobium loti (strain MAFF 303099)).